The sequence spans 123 residues: Small ribosomal subunit protein uS13 (123 aa).

The interval 103–123 (TRTNARTRKGPKKTVGVRRKK) is disordered. Residues 105 to 123 (TNARTRKGPKKTVGVRRKK) show a composition bias toward basic residues.

It belongs to the universal ribosomal protein uS13 family. In terms of assembly, part of the 30S ribosomal subunit. Forms a loose heterodimer with protein S19. Forms two bridges to the 50S subunit in the 70S ribosome.

Its function is as follows. Located at the top of the head of the 30S subunit, it contacts several helices of the 16S rRNA. In the 70S ribosome it contacts the 23S rRNA (bridge B1a) and protein L5 of the 50S subunit (bridge B1b), connecting the 2 subunits; these bridges are implicated in subunit movement. Contacts the tRNAs in the A and P-sites. In Desulforudis audaxviator (strain MP104C), this protein is Small ribosomal subunit protein uS13.